The sequence spans 145 residues: Secreted RxLR effector protein 43 (145 aa).

Residues 1–20 form the signal peptide; it reads MKVTMALAALCVALQAPCIG. Residues 31 to 34 carry the RxLR motif; it reads RHLR.

The protein belongs to the RxLR effector family.

The protein localises to the secreted. Its subcellular location is the host nucleus. The protein resides in the host cytoplasm. Functionally, secreted effector that completely suppresses the host cell death induced by cell death-inducing proteins. The polypeptide is Secreted RxLR effector protein 43 (Plasmopara viticola (Downy mildew of grapevine)).